Reading from the N-terminus, the 181-residue chain is Inner membrane-spanning protein YciB (181 aa).

The next 5 helical transmembrane spans lie at 22-42 (IYTATGALIAATAVQIAILYF), 50-70 (MHLVTFAMVTVFGTLTLAFHD), 72-92 (AFIKWKVTIIYSLFAIALAVS), 118-138 (VTWYWALFFIGCGVLNVYVAF), and 148-168 (FKVFGLTALTLLNTVISVFYI).

The protein belongs to the YciB family.

It is found in the cell inner membrane. Its function is as follows. Plays a role in cell envelope biogenesis, maintenance of cell envelope integrity and membrane homeostasis. The chain is Inner membrane-spanning protein YciB from Shewanella denitrificans (strain OS217 / ATCC BAA-1090 / DSM 15013).